The chain runs to 502 residues: Maturase K (502 aa).

This sequence belongs to the intron maturase 2 family. MatK subfamily.

It is found in the plastid. The protein localises to the chloroplast. Functionally, usually encoded in the trnK tRNA gene intron. Probably assists in splicing its own and other chloroplast group II introns. The chain is Maturase K from Cephalotaxus fortunei (Chinese plum-yew).